Here is a 1703-residue protein sequence, read N- to C-terminus: Pecanex-like protein 1 (1703 aa).

2 helical membrane passes run 31–53 (VNAL…YMAL) and 57–74 (MVIV…FLLL). Residues 91–100 (VEHQTRESKG) show a composition bias toward basic and acidic residues. Positions 91–126 (VEHQTRESKGSRGGTGGANDPVTRREDSNGLGDPGG) are disordered. Asparagine 256 carries an N-linked (GlcNAc...) asparagine glycan. 3 helical membrane passes run 416–438 (VLAV…HGFF), 477–499 (AYSR…YGSL), and 525–547 (LVIV…QVNT). N-linked (GlcNAc...) asparagine glycosylation occurs at asparagine 564. 4 helical membrane-spanning segments follow: residues 569-591 (LLSA…CFCY), 603-622 (IPVL…YHLS), 675-697 (LIVC…FIAL), and 704-721 (VLYG…YLLP). Residues asparagine 988, asparagine 1129, and asparagine 1391 are each glycosylated (N-linked (GlcNAc...) asparagine). Disordered regions lie at residues 1475 to 1556 (VQSG…HSIP) and 1577 to 1598 (TDPL…PTHA). Composition is skewed to low complexity over residues 1485 to 1510 (ARAS…RTST) and 1518 to 1556 (RSST…HSIP). Residues 1582–1591 (QHHHPHHHPQ) show a composition bias toward basic residues. Asparagine 1622 is a glycosylation site (N-linked (GlcNAc...) asparagine).

The protein belongs to the pecanex family.

It is found in the membrane. In Takifugu rubripes (Japanese pufferfish), this protein is Pecanex-like protein 1.